Consider the following 1030-residue polypeptide: Eukaryotic translation initiation factor 3 subunit A (1030 aa).

A coiled-coil region spans residues 94–126 (FKEIITPIEQKVDELKEKIEKENQENPLVEQNE). One can recognise a PCI domain in the interval 308-483 (SQLYSSVLLV…GVIRFGHYDF (176 aa)). 2 coiled-coil regions span residues 527–620 (INSL…KAKI) and 720–772 (IQQE…RKNA). 5 stretches are compositionally biased toward basic and acidic residues: residues 576-591 (RDQQ…REKE), 743-771 (EKAR…ERKN), 800-931 (RGGD…RRDG), 939-985 (GRRD…RRDG), and 1003-1019 (DSWR…KDAD). Disordered regions lie at residues 576 to 603 (RDQQ…NQLD) and 737 to 1030 (RIAA…KKRY).

Belongs to the eIF-3 subunit A family. As to quaternary structure, component of the eukaryotic translation initiation factor 3 (eIF-3) complex.

It localises to the cytoplasm. In terms of biological role, RNA-binding component of the eukaryotic translation initiation factor 3 (eIF-3) complex, which is involved in protein synthesis of a specialized repertoire of mRNAs and, together with other initiation factors, stimulates binding of mRNA and methionyl-tRNAi to the 40S ribosome. The eIF-3 complex specifically targets and initiates translation of a subset of mRNAs involved in cell proliferation. This is Eukaryotic translation initiation factor 3 subunit A (eif3A) from Dictyostelium discoideum (Social amoeba).